A 493-amino-acid chain; its full sequence is Argininosuccinate lyase (493 aa).

Belongs to the lyase 1 family. Argininosuccinate lyase subfamily.

The protein resides in the cytoplasm. It catalyses the reaction 2-(N(omega)-L-arginino)succinate = fumarate + L-arginine. It functions in the pathway amino-acid biosynthesis; L-arginine biosynthesis; L-arginine from L-ornithine and carbamoyl phosphate: step 3/3. This is Argininosuccinate lyase from Clavibacter sepedonicus (Clavibacter michiganensis subsp. sepedonicus).